Reading from the N-terminus, the 416-residue chain is 46 kDa surface antigen (416 aa).

Positions 1 to 27 (MLRKKFLYSSAIYATSLASIIAFVAAG) are cleaved as a signal peptide. The N-palmitoyl cysteine moiety is linked to residue Cys28. Cys28 is lipidated: S-diacylglycerol cysteine.

It localises to the cell membrane. In Mesomycoplasma hyopneumoniae (strain 232) (Mycoplasma hyopneumoniae), this protein is 46 kDa surface antigen (p46).